A 236-amino-acid polypeptide reads, in one-letter code: Small ribosomal subunit protein uS2c (236 aa).

The protein belongs to the universal ribosomal protein uS2 family.

The protein localises to the plastid. It localises to the chloroplast. In Vitis vinifera (Grape), this protein is Small ribosomal subunit protein uS2c (rps2).